Here is a 327-residue protein sequence, read N- to C-terminus: Deoxyribonuclease (327 aa).

Positions 1 to 24 form a signal peptide, or 35; the sequence is MSKKLRNFLVRIIVAAFASFAVMA. Residues 299–327 form a disordered region; it reads DSTTDEIENSVDDSEEIVYNDTTTEEEEN.

The catalysed reaction is Endonucleolytic cleavage to 5'-phosphodinucleotide and 5'-phosphooligonucleotide end-products.. Functionally, may have a role in S.equisimilis virulence. The chain is Deoxyribonuclease (sdc) from Streptococcus dysgalactiae subsp. equisimilis (Streptococcus equisimilis).